The primary structure comprises 320 residues: Aspartate carbamoyltransferase catalytic subunit (320 aa).

The carbamoyl phosphate site is built by R68 and T69. An L-aspartate-binding site is contributed by K96. Positions 118, 148, and 151 each coordinate carbamoyl phosphate. Positions 181 and 236 each coordinate L-aspartate. G277 and P278 together coordinate carbamoyl phosphate.

It belongs to the aspartate/ornithine carbamoyltransferase superfamily. ATCase family. As to quaternary structure, heterododecamer (2C3:3R2) of six catalytic PyrB chains organized as two trimers (C3), and six regulatory PyrI chains organized as three dimers (R2).

It carries out the reaction carbamoyl phosphate + L-aspartate = N-carbamoyl-L-aspartate + phosphate + H(+). It participates in pyrimidine metabolism; UMP biosynthesis via de novo pathway; (S)-dihydroorotate from bicarbonate: step 2/3. Its function is as follows. Catalyzes the condensation of carbamoyl phosphate and aspartate to form carbamoyl aspartate and inorganic phosphate, the committed step in the de novo pyrimidine nucleotide biosynthesis pathway. In Delftia acidovorans (strain DSM 14801 / SPH-1), this protein is Aspartate carbamoyltransferase catalytic subunit.